A 358-amino-acid chain; its full sequence is 3-dehydroquinate synthase (358 aa).

NAD(+)-binding positions include 70–75, 104–108, 128–129, lysine 141, lysine 150, and 168–171; these read DGEQFK, GVIGD, TT, and CLHT. The Zn(2+) site is built by glutamate 183, histidine 246, and histidine 263.

This sequence belongs to the sugar phosphate cyclases superfamily. Dehydroquinate synthase family. Co(2+) serves as cofactor. Zn(2+) is required as a cofactor. It depends on NAD(+) as a cofactor.

The protein localises to the cytoplasm. It carries out the reaction 7-phospho-2-dehydro-3-deoxy-D-arabino-heptonate = 3-dehydroquinate + phosphate. Its pathway is metabolic intermediate biosynthesis; chorismate biosynthesis; chorismate from D-erythrose 4-phosphate and phosphoenolpyruvate: step 2/7. In terms of biological role, catalyzes the conversion of 3-deoxy-D-arabino-heptulosonate 7-phosphate (DAHP) to dehydroquinate (DHQ). The sequence is that of 3-dehydroquinate synthase from Shewanella baltica (strain OS195).